The sequence spans 258 residues: Probable succinate transporter subunit YjjP (258 aa).

A run of 5 helical transmembrane segments spans residues 116 to 137, 143 to 160, 171 to 191, 197 to 217, and 231 to 251; these read YPRWLLVLMVGLSCACFCKLNN, AVVTFFASTVAMYIRQLL, FCITAFVATTISGLMLRLPAF, IAMAASVLLLVPGFPLINAVA, and WAIASLLTLATCIGVVMAMTM.

Belongs to the ThrE exporter (TC 2.A.79) family. In terms of assembly, the transporter is composed of YjjB and YjjP.

It localises to the cell inner membrane. In terms of biological role, involved in succinate export with YjjB. Both proteins are required for export. Participates in succinate export, but also in the export of other dicarboxylates, such as fumarate and malate. Contributes to succinate production under both aerobic and anaerobic conditions, and increases fumarate and malate production during anaerobic succinate production. The chain is Probable succinate transporter subunit YjjP from Klebsiella aerogenes (strain ATCC 13048 / DSM 30053 / CCUG 1429 / JCM 1235 / KCTC 2190 / NBRC 13534 / NCIMB 10102 / NCTC 10006 / CDC 819-56) (Enterobacter aerogenes).